The primary structure comprises 200 residues: MRFLRWIRQIWRKVPNWVLFWKHLAKPGLSDQREKHLLKGPEKTSKDFDTVKLANAQKEDMVSDLDVCPGVLRSVKERSPLHDRESRSSRDSRSLMTVVNSVSTFMFSVLQSGWRLCRWKSSMSTGKVSSHTRTGSALGTPEAEMLREVYLVLWVIRKQLRELARRQERRRRRRMRSHASHTSRHSESVQGLKHDARSPL.

At serine 63 the chain carries Phosphoserine. Residues 167–183 (QERRRRRRMRSHASHTS) are compositionally biased toward basic residues. Positions 167–200 (QERRRRRRMRSHASHTSRHSESVQGLKHDARSPL) are disordered. Basic and acidic residues predominate over residues 184 to 200 (RHSESVQGLKHDARSPL).

The protein localises to the cytoplasmic vesicle. It localises to the secretory vesicle. Its subcellular location is the acrosome. In terms of biological role, may play an important role in acrosome formation and nucleus shaping during spermiogenesis. In Rattus norvegicus (Rat), this protein is Sperm acrosome developmental regulator (Spacdr).